Here is a 443-residue protein sequence, read N- to C-terminus: NADH-quinone oxidoreductase subunit D 1 (443 aa).

Belongs to the complex I 49 kDa subunit family. In terms of assembly, NDH-1 is composed of 14 different subunits. Subunits NuoB, C, D, E, F, and G constitute the peripheral sector of the complex.

It localises to the cell membrane. The catalysed reaction is a quinone + NADH + 5 H(+)(in) = a quinol + NAD(+) + 4 H(+)(out). Functionally, NDH-1 shuttles electrons from NADH, via FMN and iron-sulfur (Fe-S) centers, to quinones in the respiratory chain. The immediate electron acceptor for the enzyme in this species is believed to be a menaquinone. Couples the redox reaction to proton translocation (for every two electrons transferred, four hydrogen ions are translocated across the cytoplasmic membrane), and thus conserves the redox energy in a proton gradient. The protein is NADH-quinone oxidoreductase subunit D 1 of Streptomyces avermitilis (strain ATCC 31267 / DSM 46492 / JCM 5070 / NBRC 14893 / NCIMB 12804 / NRRL 8165 / MA-4680).